The following is a 489-amino-acid chain: Kynureninase 2 (489 aa).

Positions 1–12 are enriched in polar residues; sequence MDASAAISQLRQ. The segment at 1–25 is disordered; the sequence is MDASAAISQLRQGQKPEWPQNANTS. Pyridoxal 5'-phosphate is bound by residues Leu149, Thr150, 177–180, Asp261, His264, and Tyr286; that span reads FPSD. Lys287 bears the N6-(pyridoxal phosphate)lysine mark. Pyridoxal 5'-phosphate-binding residues include Trp317 and Asn345.

It belongs to the kynureninase family. As to quaternary structure, homodimer. The cofactor is pyridoxal 5'-phosphate.

It localises to the cytoplasm. It carries out the reaction L-kynurenine + H2O = anthranilate + L-alanine + H(+). The catalysed reaction is 3-hydroxy-L-kynurenine + H2O = 3-hydroxyanthranilate + L-alanine + H(+). It functions in the pathway amino-acid degradation; L-kynurenine degradation; L-alanine and anthranilate from L-kynurenine: step 1/1. Its pathway is cofactor biosynthesis; NAD(+) biosynthesis; quinolinate from L-kynurenine: step 2/3. Functionally, catalyzes the cleavage of L-kynurenine (L-Kyn) and L-3-hydroxykynurenine (L-3OHKyn) into anthranilic acid (AA) and 3-hydroxyanthranilic acid (3-OHAA), respectively. This chain is Kynureninase 2, found in Phaeosphaeria nodorum (strain SN15 / ATCC MYA-4574 / FGSC 10173) (Glume blotch fungus).